Reading from the N-terminus, the 513-residue chain is NAD(P)H-quinone oxidoreductase subunit 2 (513 aa).

The next 14 membrane-spanning stretches (helical) occupy residues Thr12 to Ile32, Leu41 to Ile61, Leu77 to Val97, Ser104 to Leu124, Met130 to Tyr150, Leu165 to Phe185, Ile199 to Phe219, Pro238 to Ile258, Trp272 to Ile292, Met300 to Thr320, Ile328 to Phe348, Leu372 to Gly392, Leu394 to Val414, and Ala456 to Ile476. Polar residues predominate over residues Thr494–Ala505. The interval Thr494–Arg513 is disordered.

Belongs to the complex I subunit 2 family. In terms of assembly, NDH-1 can be composed of about 15 different subunits; different subcomplexes with different compositions have been identified which probably have different functions.

It is found in the cell inner membrane. The catalysed reaction is a plastoquinone + NADH + (n+1) H(+)(in) = a plastoquinol + NAD(+) + n H(+)(out). The enzyme catalyses a plastoquinone + NADPH + (n+1) H(+)(in) = a plastoquinol + NADP(+) + n H(+)(out). Its function is as follows. NDH-1 shuttles electrons from an unknown electron donor, via FMN and iron-sulfur (Fe-S) centers, to quinones in the respiratory and/or the photosynthetic chain. The immediate electron acceptor for the enzyme in this species is believed to be plastoquinone. Couples the redox reaction to proton translocation, and thus conserves the redox energy in a proton gradient. Cyanobacterial NDH-1 also plays a role in inorganic carbon-concentration. The sequence is that of NAD(P)H-quinone oxidoreductase subunit 2 from Gloeobacter violaceus (strain ATCC 29082 / PCC 7421).